We begin with the raw amino-acid sequence, 199 residues long: GTP-binding protein Di-Ras2 (199 aa).

Residues 14–21 (GAGGVGKS), 33–39 (RESYIPT), 61–65 (DTTGS), and 121–124 (NKCD) contribute to the GTP site. Serine 35 is modified (phosphoserine). The short motif at 36–44 (YIPTVEDTY) is the Effector region element. The residue at position 126 (serine 126) is a Phosphoserine. GTP is bound at residue 152–153 (AK). Cysteine 196 carries the cysteine methyl ester modification. Residue cysteine 196 is the site of S-geranylgeranyl cysteine attachment. Positions 197–199 (VVM) are cleaved as a propeptide — removed in mature form.

The protein belongs to the small GTPase superfamily. Di-Ras family. In terms of processing, ubiquitinated by the ECS(ASB11) complex via 'Lys-11'-linked ubiquitin chains, leading to its degradation by the proteasome.

It localises to the cell membrane. It carries out the reaction GTP + H2O = GDP + phosphate + H(+). Its function is as follows. Displays low GTPase activity and exists predominantly in the GTP-bound form. The polypeptide is GTP-binding protein Di-Ras2 (Diras2) (Mus musculus (Mouse)).